Reading from the N-terminus, the 550-residue chain is Chaperonin GroEL 1 (550 aa).

Residues 29-32, 86-90, G413, 477-479, and D493 each bind ATP; these read TIGP, DGTTT, and NAA. A disordered region spans residues 524–550; that stretch reads AVSDGDHGHSHGHGHSHGHSHPQGPGF. Over residues 533-543 the composition is skewed to basic residues; that stretch reads SHGHGHSHGHS.

The protein belongs to the chaperonin (HSP60) family. Forms a cylinder of 14 subunits composed of two heptameric rings stacked back-to-back. Interacts with the co-chaperonin GroES.

It localises to the cytoplasm. The catalysed reaction is ATP + H2O + a folded polypeptide = ADP + phosphate + an unfolded polypeptide.. Its function is as follows. Together with its co-chaperonin GroES, plays an essential role in assisting protein folding. The GroEL-GroES system forms a nano-cage that allows encapsulation of the non-native substrate proteins and provides a physical environment optimized to promote and accelerate protein folding. This chain is Chaperonin GroEL 1, found in Frankia alni (strain DSM 45986 / CECT 9034 / ACN14a).